Consider the following 353-residue polypeptide: Rhodopsin (353 aa).

The Extracellular portion of the chain corresponds to 1 to 36 (MNGTEGPYFYVPMVNTSGIVRSPYEYPQYYLVNPAA). N-linked (GlcNAc...) asparagine glycosylation is found at N2 and N15. Residues 37–61 (YAALGAYMFLLILVGFPINFLTLYV) traverse the membrane as a helical segment. At 62–73 (TIEHKKLRTPLN) the chain is on the cytoplasmic side. The chain crosses the membrane as a helical span at residues 74–96 (YILLNLAVADLFMVFGGFTTTMY). The Extracellular portion of the chain corresponds to 97–110 (TSMHGYFVLGRLGC). The cysteines at positions 110 and 187 are disulfide-linked. The helical transmembrane segment at 111–133 (NIEGFFATLGGEIALWSLVVLAI) threads the bilayer. A 'Ionic lock' involved in activated form stabilization motif is present at residues 134 to 136 (ERW). At 134 to 152 (ERWVVVCKPISNFRFGENH) the chain is on the cytoplasmic side. A helical transmembrane segment spans residues 153 to 173 (AIMGLAFTWLMAMACAAPPLV). Residues 174–202 (GWSRYIPEGMQCSCGIDYYTRAEGFNNES) are Extracellular-facing. N200 is a glycosylation site (N-linked (GlcNAc...) asparagine). The helical transmembrane segment at 203-224 (FVIYMFVCHFLIPLMVVFFCYG) threads the bilayer. The Cytoplasmic portion of the chain corresponds to 225 to 252 (RLLCAVKEAAAAQQESETTQRAEREVTR). Residues 253–274 (MVVIMVIAFLICWCPYAGVAWW) form a helical membrane-spanning segment. The Extracellular segment spans residues 275–286 (IFTHQGSDFGPV). The helical transmembrane segment at 287–308 (FMTIPAFFAKSSSIYNPMIYIC) threads the bilayer. An N6-(retinylidene)lysine modification is found at K296. The Cytoplasmic portion of the chain corresponds to 309–353 (LNKQFRHCMITTLCCGKNPFEEEEGASTASKTEASSVSSSSVSPA). S-palmitoyl cysteine attachment occurs at residues C322 and C323. A disordered region spans residues 331-353 (EEGASTASKTEASSVSSSSVSPA). A compositionally biased stretch (low complexity) spans 334–353 (ASTASKTEASSVSSSSVSPA).

The protein belongs to the G-protein coupled receptor 1 family. Opsin subfamily. Post-translationally, phosphorylated on some or all of the serine and threonine residues present in the C-terminal region. Contains one covalently linked retinal chromophore.

It is found in the membrane. The protein resides in the cell projection. The protein localises to the cilium. Its subcellular location is the photoreceptor outer segment. Functionally, photoreceptor required for image-forming vision at low light intensity. While most salt water fish species use retinal as chromophore, most freshwater fish use 3-dehydroretinal, or a mixture of retinal and 3-dehydroretinal. Light-induced isomerization of 11-cis to all-trans retinal triggers a conformational change that activates signaling via G-proteins. Subsequent receptor phosphorylation mediates displacement of the bound G-protein alpha subunit by arrestin and terminates signaling. This is Rhodopsin (rho) from Lithognathus mormyrus (Striped seabream).